We begin with the raw amino-acid sequence, 149 residues long: uncharacterized protein (149 aa).

Residues 111–140 adopt a coiled-coil conformation; it reads HKALEKATELIENEEELLKREGIKRENLKF.

This is an uncharacterized protein from Aquifex aeolicus (strain VF5).